Consider the following 102-residue polypeptide: uncharacterized protein (102 aa).

A helical membrane pass occupies residues 7-23 (IVFVSCVILGLAACSSQ).

The protein localises to the membrane. This is an uncharacterized protein from Haemophilus influenzae (strain ATCC 51907 / DSM 11121 / KW20 / Rd).